The sequence spans 258 residues: Isoprenyl transferase 2 (258 aa).

The active site involves D35. D35 contacts Mg(2+). Residues 36-39 (GNRR), W40, R50, and 81-83 (SDD) each bind substrate. Residue N84 is the Proton acceptor of the active site. Residues R87, R207, and 213–215 (RLS) contribute to the substrate site. E226 is a binding site for Mg(2+).

The protein belongs to the UPP synthase family. Homodimer. Requires Mg(2+) as cofactor.

Functionally, catalyzes the condensation of isopentenyl diphosphate (IPP) with allylic pyrophosphates generating different type of terpenoids. This Streptomyces coelicolor (strain ATCC BAA-471 / A3(2) / M145) protein is Isoprenyl transferase 2.